The primary structure comprises 275 residues: Tumor necrosis factor-inducible gene 6 protein (275 aa).

An N-terminal signal peptide occupies residues 1-17; that stretch reads MVVLLCLCVLLWEEAHG. In terms of domain architecture, Link spans 36–129; that stretch reads GVYHREARAG…SERWDAYCYN (94 aa). 3 disulfides stabilise this stretch: Cys58–Cys127, Cys82–Cys103, and Cys135–Cys161. Asn118 is a glycosylation site (N-linked (GlcNAc...) asparagine). A CUB domain is found at 135 to 247; that stretch reads CGGVFTDPKR…GGFQIKYVTV (113 aa). Residues Glu183, Asp191, Asp232, Ser234, and Val235 each coordinate Ca(2+). Cys188 and Cys210 form a disulfide bridge. Polar residues predominate over residues 253–264; that stretch reads SSQAKNTSTTGN. A disordered region spans residues 253–275; that stretch reads SSQAKNTSTTGNKKFLPGRFSHL. Residue Asn258 is glycosylated (N-linked (GlcNAc...) asparagine).

In terms of assembly, interacts (via Link domain) with inter-alpha-inhibitor (I-alpha-I) component bikunin. Interacts with ITIH2/HC2; this interaction is required for transesterification of the HC to hyaluronan. Interacts (via Link and CUB domains) with ITIH1. Chondroitin sulfate may be required for the stability of the complex. Interacts (via Link domain) with various C-X-C and C-C chemokines including PF4, CXCL8, CXCL11, CXCL12, CCL2, CCL7, CCL19, CCL21, and CCL27; this interaction interferes with chemokine binding to glycosaminoglycans. Interacts (primarily via Link domain) with BMP2; this interaction is inhibited by hyaluronan. Interacts (via both Link and CUB domains) with TNFSF11. Interacts (via CUB domain) with FN1 (via type III repeats 9-14); this interaction enhances fibronectin fibril assembly. TNFAIP6 may act as a bridging molecule between FN1 and THBS1. In terms of tissue distribution, expressed in epiphyseal and metaphyseal bone marrow of both the femur and tibia (at protein level).

Its subcellular location is the secreted. Functionally, major regulator of extracellular matrix organization during tissue remodeling. Catalyzes the transfer of a heavy chain (HC) from inter-alpha-inhibitor (I-alpha-I) complex to hyaluronan. Cleaves the ester bond between the C-terminus of the HC and GalNAc residue of the chondroitin sulfate chain in I-alpha-I complex followed by transesterification of the HC to hyaluronan. In the process, potentiates the antiprotease function of I-alpha-I complex through release of free bikunin. Acts as a catalyst in the formation of hyaluronan-HC oligomers and hyaluronan-rich matrix surrounding the cumulus cell-oocyte complex, a necessary step for oocyte fertilization. Assembles hyaluronan in pericellular matrices that serve as platforms for receptor clustering and signaling. Enables binding of hyaluronan deposited on the surface of macrophages to LYVE1 on lymphatic endothelium and facilitates macrophage extravasation. Alters hyaluronan binding to functionally latent CD44 on vascular endothelium, switching CD44 into an active state that supports leukocyte rolling. Modulates the interaction of chemokines with extracellular matrix components and proteoglycans on endothelial cell surface, likely preventing chemokine gradient formation. In a negative feedback mechanism, may limit excessive neutrophil recruitment at inflammatory sites by antagonizing the association of CXCL8 with glycosaminoglycans on vascular endothelium. Has a role in osteogenesis and bone remodeling. Inhibits BMP2-dependent differentiation of mesenchymal stem cell to osteoblasts. Protects against bone erosion during inflammation by inhibiting TNFSF11/RANKL-dependent osteoclast activation. The sequence is that of Tumor necrosis factor-inducible gene 6 protein (Tnfaip6) from Mus musculus (Mouse).